We begin with the raw amino-acid sequence, 902 residues long: Nuclear factor of activated T-cells, cytoplasmic 4 (902 aa).

Disordered regions lie at residues 16–180 (VFGE…SSWS) and 208–369 (RFGL…GGSR). Over residues 50 to 81 (EPPPYGAAPIGIPRPPPPRPGMHSPPPRPAPS) the composition is skewed to pro residues. Positions 96 to 109 (GGPGGGAGGAGGGR) are enriched in gly residues. The interval 114–119 (PSIRIT) is calcineurin-binding. Residues 151–165 (GFGGYREAGGQGGGA) are compositionally biased toward gly residues. Positions 166-180 (FFSPSPGSSSLSSWS) are enriched in low complexity. Phosphoserine; by MAPK7 and MAPK14 is present on residues Ser168 and Ser170. Residues Ser213 and Ser217 each carry the phosphoserine; by MAPK8 and MAPK9 modification. The SP 1 repeat unit spans residues 213–229 (SPLPSPRASPRPWTPED). A 2 approximate SP repeats region spans residues 213–293 (SPLPSPRASP…LSRRGSLGEE (81 aa)). Pro residues-rich tracts occupy residues 215 to 227 (LPSP…PWTP) and 254 to 263 (GPTPASPRPA). The short motif at 268–270 (KRR) is the Nuclear localization signal element. Positions 272 to 288 (SSSGTPSSASPALSRRG) are enriched in low complexity. One copy of the SP 2; approximate repeat lies at 277-293 (PSSASPALSRRGSLGEE). Ser289 and Ser344 each carry phosphoserine; by RPS6KA3. An RHD domain is found at 401-582 (SALPPLDWPL…VPIECSQRSA (182 aa)). Residues 430–437 (RAHYETEG) mediate DNA binding. The IPT/TIG domain maps to 586–683 (PQVEAYSPSA…KRSPTQSFRF (98 aa)). The Nuclear localization signal signature appears at 672–674 (RRK). Lys689 is covalently cross-linked (Glycyl lysine isopeptide (Lys-Gly) (interchain with G-Cter in SUMO2)). Residues 791–870 (PYGGRGSSFS…GGYSSGFRDS (80 aa)) form a disordered region. Residues 805-824 (FSPPAPFRPPPLPASPPLEG) are compositionally biased toward pro residues.

In terms of assembly, member of the multicomponent NFATC transcription complex that consists of at least two components, a pre-existing cytoplasmic component NFATC2 and an inducible nuclear component NFATC1. Other NFAT proteins, such as NFATC3, or members of the activating protein-1 (AP-1) family and MAF can also bind the complex. NFAT proteins can bind DNA as monomers or dimers. Component of a promoter-binding complex composed of STAT3, NFATC3 and NFATC4; complex formation is enhanced by calcineurin. Interacts with CREBBP; this interaction potentiates transcription activation. Interacts with MAPK8/JNK1 and MAPK9/JNK2. Interacts with GATA4 (via the second Zn finger). Interacts (via N-terminus) with IRAK1 (via C-terminus). Interacts with RPS6KA3. Interacts with HOMER1, HOMER2 and HOMER3; this interaction competes with calcineurin/PPP3CA-binding and hence prevents NFATC4 dephosphorylation and activation. Interacts with ESR1 and ESR2; this interaction decreases NFATC4 transcriptional activity. Interacts with MTOR and MAPK7/ERK5. Interacts with TRIM17; this interaction prevents NFATC3 nuclear localization. Interacts with TCF25 (via C-terminus); the interaction leads to suppression of NFATC4 transcription factor activity and is reduced following stimulation with angiotensin-2. In terms of processing, phosphorylated by NFATC-kinases; dephosphorylated by calcineurin/PPP3CA. Phosphorylated on Ser-168 and Ser-170 by MTOR, IRAK1, MAPK7/ERK5 and MAPK14/p38, on Ser-213 and Ser-217 by MAPK8/JNK1 and MAPK9/JNK2, and on Ser-289 and Ser-344 by RPS6KA3. Phosphorylated by GSK3B. Phosphorylation by GSK3B markedly increases NFATC4 ubiquitination. Phosphorylation at Ser-168 and Ser-170 is stimulated by UV irradiation. Phosphorylation determines subcellular location: the hyperphosphorylated protein is cytosolic, while the dephosphorylated form is targeted to the nucleus. Ubiquitinated, leading to degradation by the proteasome. Ubiquitination may be stimulated by GSK3B-dependent phosphorylation. Polyubiquitin linkage mainly occurs through 'Lys-48'. As to expression, widely expressed, with high levels in placenta, lung, kidney, testis and ovary. Weakly expressed in spleen and thymus. In the hippocampus, expressed in the granular layer of the dentate gyrus, in the pyramidal neurons of CA3 region, and in the hippocampal fissure. Expressed in the heart (at protein level).

The protein localises to the cytoplasm. The protein resides in the nucleus. Transcriptional activity may be repressed by ESR1 and ESR2. In terms of biological role, ca(2+)-regulated transcription factor that is involved in several processes, including the development and function of the immune, cardiovascular, musculoskeletal, and nervous systems. Involved in T-cell activation, stimulating the transcription of cytokine genes, including that of IL2 and IL4. Along with NFATC3, involved in embryonic heart development. Following JAK/STAT signaling activation and as part of a complex with NFATC3 and STAT3, binds to the alpha-beta E4 promoter region of CRYAB and activates transcription in cardiomyocytes. Involved in mitochondrial energy metabolism required for cardiac morphogenesis and function. Transactivates many genes involved in the cardiovascular system, including AGTR2, NPPB/BNP (in synergy with GATA4), NPPA/ANP/ANF and MYH7/beta-MHC. Involved in the regulation of adult hippocampal neurogenesis. Involved in BDNF-driven pro-survival signaling in hippocampal adult-born neurons. Involved in the formation of long-term spatial memory and long-term potentiation. In cochlear nucleus neurons, may play a role in deafferentation-induced apoptosis during the developmental critical period, when auditory neurons depend on afferent input for survival. Binds to and activates the BACE1/Beta-secretase 1 promoter, hence may regulate the proteolytic processing of the amyloid precursor protein (APP). Plays a role in adipocyte differentiation. May be involved in myoblast differentiation into myotubes. Binds the consensus DNA sequence 5'-GGAAAAT-3'. In the presence of CREBBP, activates TNF transcription. Binds to PPARG gene promoter and regulates its activity. Binds to PPARG and REG3G gene promoters. The protein is Nuclear factor of activated T-cells, cytoplasmic 4 (NFATC4) of Homo sapiens (Human).